Reading from the N-terminus, the 444-residue chain is Probable glycine dehydrogenase (decarboxylating) subunit 1 (444 aa).

Belongs to the GcvP family. N-terminal subunit subfamily. In terms of assembly, the glycine cleavage system is composed of four proteins: P, T, L and H. In this organism, the P 'protein' is a heterodimer of two subunits.

The enzyme catalyses N(6)-[(R)-lipoyl]-L-lysyl-[glycine-cleavage complex H protein] + glycine + H(+) = N(6)-[(R)-S(8)-aminomethyldihydrolipoyl]-L-lysyl-[glycine-cleavage complex H protein] + CO2. The glycine cleavage system catalyzes the degradation of glycine. The P protein binds the alpha-amino group of glycine through its pyridoxal phosphate cofactor; CO(2) is released and the remaining methylamine moiety is then transferred to the lipoamide cofactor of the H protein. This Chlorobium phaeobacteroides (strain DSM 266 / SMG 266 / 2430) protein is Probable glycine dehydrogenase (decarboxylating) subunit 1.